A 166-amino-acid chain; its full sequence is Probable tyrosine-protein phosphatase DG1060 (166 aa).

The Tyrosine-protein phosphatase domain maps to 9 to 162; that stretch reads NFGMVADDLY…LVTYNNAPQW (154 aa). Residue cysteine 101 is the Phosphocysteine intermediate of the active site.

This sequence belongs to the protein-tyrosine phosphatase family.

It is found in the cytoplasm. The catalysed reaction is O-phospho-L-tyrosyl-[protein] + H2O = L-tyrosyl-[protein] + phosphate. The protein is Probable tyrosine-protein phosphatase DG1060 (DG1060) of Dictyostelium discoideum (Social amoeba).